The following is a 142-amino-acid chain: Large ribosomal subunit protein uL13 (142 aa).

This sequence belongs to the universal ribosomal protein uL13 family. Part of the 50S ribosomal subunit.

Functionally, this protein is one of the early assembly proteins of the 50S ribosomal subunit, although it is not seen to bind rRNA by itself. It is important during the early stages of 50S assembly. This chain is Large ribosomal subunit protein uL13, found in Alcanivorax borkumensis (strain ATCC 700651 / DSM 11573 / NCIMB 13689 / SK2).